A 378-amino-acid polypeptide reads, in one-letter code: Peptide chain release factor RF2 (378 aa).

Q253 bears the N5-methylglutamine mark.

Belongs to the prokaryotic/mitochondrial release factor family. Interacts with the ribosome. Interacts with ribosomal protein L11. Recruited to stalled E.coli ribosomes by E.coli ArfA.

It localises to the cytoplasm. Peptide chain release factor 2 directs the termination of translation in response to the peptide chain termination codons UGA and UAA. In endogenous ribosomes interacts with P-site tRNA and 23S rRNA. In the presence of truncated mRNA in the 70S ribosome, ArfA and RF2 interact such that the GGQ peptide hydrolysis motif of RF2 rises into the peptidyl-transferase center and releases the ribosome. Recruited to stalled E.coli 70S ribosomes by E.coli ArfA, but cannot be functionally accomodated in the peptidyl-transferase center. Note T.thermophilus probably does not encode arfA. This is Peptide chain release factor RF2 (prfB) from Thermus thermophilus (strain ATCC 27634 / DSM 579 / HB8).